A 300-amino-acid chain; its full sequence is Folate-binding protein 1 (300 aa).

The signal sequence occupies residues 1–28 (MGRCLTKKVFLIQSPILFLHLLISLSSG). 5 cysteine pairs are disulfide-bonded: Cys38-Cys76, Cys68-Cys111, Cys77-Cys114, Cys102-Cys139, and Cys132-Cys178. Asn173 is a glycosylation site (N-linked (GlcNAc...) asparagine). The helical transmembrane segment at 238–258 (MTTIQKISLGMSFLIAGMFLI) threads the bilayer.

Belongs to the folate receptor family. As to expression, expressed in leaves.

The protein localises to the membrane. Functionally, folic acid-binding protein involved in salicylic acid- (SA-) induced folate accumulation by triggering uptake and accumulation of folic acid in cells. May be implicated in the transport of the folates from the site of production (leaves) to the site of storage (fruits and seeds) and utilization (roots). The protein is Folate-binding protein 1 of Arabidopsis thaliana (Mouse-ear cress).